A 666-amino-acid chain; its full sequence is MYEQKVAIDIVKESFGDDVTKVFEFLVQRGKSSYKIINQSLSGKGGLTIKRIKQCLLVLIQHNLVTYEEFLLPLTKDEIEKLVPGEPLPSDSVYEAIIVNAIHRLRFPKFINYIKHSKGDEAAYILEELIDHGRLPMDLLIKQASQIQRVDTFEDQDDITKRFEDTFTKLIMDQFIMRAPRPRPVSDQETSNALSKEAKKVGGGGANGNNVGAHQKKDSDPFALPSVGFSSNGPLSSVDNSANDAESLEILTGKSSTTTIPSQPKKGTAKKTSAKPKSTAINTTATASLGRKRKSRDIYDEDDDEEPDLLVIEENVEINVNDHNSANKNSTTTTTTTTTKTGQHTLKKSKLDQSSSTTTTSSRQQQNGMDQQRIIDESRVLWTINYEQFIIEFKLKACYDFVTEKNNQQSGLLFNAMVKLCKRSIRSNQDSLTSCVYGENILEEYNRDLDSSKKMDKLQIEKYLSIMQASRPSMVTKMVSKSKQSSSSELGAYQVNVGNIIGIIKQKMVESIIKQKFGDNGLRVFKLLLIKNLLEPKQIAELAMIPPNECKALLFNMMQKNIIRLQEIPRSSDHFANRTFYLFFVDLPTIIATFTEDIFKAIYNTRERLKSELEPHKDALEKLTQLDEDQITEDQAKIYKKTDRITQTLLTVILNLDNDLLHLYSF.

Disordered stretches follow at residues 179 to 228 (APRP…PSVG), 250 to 307 (ILTG…DEEP), and 320 to 371 (VNDH…GMDQ). 2 stretches are compositionally biased toward polar residues: residues 253–262 (GKSSTTTIPS) and 321–330 (NDHNSANKNS). Low complexity-rich tracts occupy residues 331-341 (TTTTTTTTTKT) and 353-366 (QSSSTTTTSSRQQQ).

Belongs to the eukaryotic RPC3/POLR3C RNA polymerase subunit family. As to quaternary structure, component of the RNA polymerase III (Pol III) complex consisting of 17 subunits.

The protein localises to the nucleus. In terms of biological role, DNA-dependent RNA polymerase catalyzes the transcription of DNA into RNA using the four ribonucleoside triphosphates as substrates. Specific core component of RNA polymerase III which synthesizes small RNAs, such as 5S rRNA and tRNAs. This is DNA-directed RNA polymerase III subunit rpc3 (polr3c) from Dictyostelium discoideum (Social amoeba).